The sequence spans 24 residues: Lectin (24 aa).

Positions 1–18 (AEEQSFSSTKFSTDQPNL) are enriched in polar residues. A disordered region spans residues 1 to 24 (AEEQSFSSTKFSTDQPNLILQGDA).

This sequence belongs to the leguminous lectin family. Homotetramer.

The chain is Lectin from Crotalaria juncea (Sunn hemp).